We begin with the raw amino-acid sequence, 119 residues long: Protein yippee-like 1 (119 aa).

The Yippee domain occupies 19–116 (RTYSCIHCRA…IELAHMIKDN (98 aa)). Positions 23, 26, 79, and 82 each coordinate Zn(2+). The short motif at 99–104 (KYKEGK) is the Nuclear localization signal element.

The protein belongs to the yippee family.

The protein resides in the nucleus. Functionally, may play a role in epithelioid conversion of fibroblasts. The protein is Protein yippee-like 1 (YPEL1) of Chlorocebus aethiops (Green monkey).